The primary structure comprises 367 residues: MSEHQSLPAPEASTEVRVAIVGVGNCASSLVQGVEYYYNADDTSTVPGLMHVRFGPYHVRDVKFVAAFDVDAKKVGFDLSDAIFASENNTIKIADVAPTNVIVQRGPTLDGIGKYYADTIELSDAEPVDVVQALKEAKVDVLVSYLPVGSEEADKFYAQCAIDAGVAFVNALPVFIASDPVWAKKFTDARVPIVGDDIKSQVGATITHRVLAKLFEDRGVQLDRTMQLNVGGNMDFLNMLERERLESKKISKTQAVTSNLKREFKTKDVHIGPSDHVGWLDDRKWAYVRLEGRAFGDVPLNLEYKLEVWDSPNSAGVIIDAVRAAKIAKDRGIGGPVIPASAYLMKSPPEQLPDDIARAQLEEFIIG.

At serine 2 the chain carries N-acetylserine. Lysine 73 participates in a covalent cross-link: Isoglutamyl lysine isopeptide (Lys-Gln) (interchain with Q-Cter in protein Pup). NAD(+) is bound by residues aspartate 78, alanine 137, tyrosine 157, serine 200, aspartate 235, and lysine 248.

Belongs to the myo-inositol 1-phosphate synthase family. NAD(+) is required as a cofactor. Pupylated at Lys-73 by the prokaryotic ubiquitin-like protein Pup, which leads to its degradation by the proteasome.

It catalyses the reaction D-glucose 6-phosphate = 1D-myo-inositol 3-phosphate. Its function is as follows. Key enzyme in myo-inositol biosynthesis pathway that catalyzes the conversion of glucose 6-phosphate to 1D-myo-inositol 3-phosphate in a NAD-dependent manner. The polypeptide is Inositol-3-phosphate synthase (ino1) (Mycobacterium tuberculosis (strain ATCC 25618 / H37Rv)).